Reading from the N-terminus, the 1023-residue chain is MFHLRTCAAKLRPLTASQTVKTFSQNRPAAARTFQQIRCYSAPVAAEPFLSGTSSNYVEEMYCAWLENPKSVHKSWDIFFRNTNAGAPPGTAYQSPLPLSRGSLAAVAHAQSLVEAQPNVDKLVEDHLAVQSLIRAYQIRGHHVAQLDPLGILDADLDSSVPADIISSTDKLGFYGLDESDLDKVFHLPTTTFIGGQESALPLREIIRRLEMAYCQHIGVEFMFINDLEQCQWIRQKFETPGIMQFTNEEKRTLLARLVRSTRFEEFLQRKWSSEKRFGLEGCEVLIPALKTIIDKSSENGVDYVIMGMPHRGRLNVLANVIRKELEQIFCQFDSKLEAADEGSGDVKYHLGMYHRRINRVTDRNITLSLVANPSHLEAADPVVMGKTKAEQFYCGDTEGKKVMSILLHGDAAFAGQGIVYETFHLSDLPSYTTHGTVHVVVNNQIGFTTDPRMARSSPYPTDVARVVNAPIFHVNSDDPEAVMYVCKVAAEWRSTFHKDVVVDLVCYRRNGHNEMDEPMFTQPLMYKQIRKQKPVLQKYAELLVSQGVVNQPEYEEEISKYDKICEEAFARSKDEKILHIKHWLDSPWPGFFTLDGQPRSMSCPSTGLTEDILTHIGNVASSVPVENFTIHGGLSRILKTRGEMVKNRTVDWALAEYMAFGSLLKEGIHIRLSGQDVERGTFSHRHHVLHDQNVDKRTCIPMNHLWPNQAPYTVCNSSLSEYGVLGFELGFAMASPNALVLWEAQFGDFHNTAQCIIDQFICPGQAKWVRQNGIVLLLPHGMEGMGPEHSSARPERFLQMCNDDPDVLPDLKEANFDINQLHDCNWVVVNCSTPGNFFHVLRRQILLPFRKPLIIFTPKSLLRHPEARSSFDEMLPGTHFQRVIPEDGPAAQNPENVKRLLFCTGKVYYDLTRERKARDMVGQVAITRIEQLSPFPFDLLLKEVQKYPNAELAWCQEEHKNQGYYDYVKPRLRTTISRAKPVWYAGRDPAAAPATGNKKTHLTELQRLLDTAFDLDVFKNFS.

Residues 1 to 40 (MFHLRTCAAKLRPLTASQTVKTFSQNRPAAARTFQQIRCY) constitute a mitochondrion transit peptide. Lys-74 bears the N6-succinyllysine mark. The residue at position 100 (Ser-100) is a Phosphoserine. Residues His-143, Asp-156, and Asp-158 each contribute to the Ca(2+) site. Position 312 (Arg-312) interacts with thiamine diphosphate. Lys-401 carries the N6-acetyllysine modification. Asp-411, Asn-444, and Ile-446 together coordinate thiamine diphosphate. Mg(2+)-binding residues include Asp-411, Asn-444, and Ile-446. Lys-534 is covalently cross-linked (Glycyl lysine isopeptide (Lys-Gly) (interchain with G-Cter in ubiquitin)). Lys-564 is subject to N6-succinyllysine. Gln-676 is a binding site for thiamine diphosphate. Lys-970 carries the N6-acetyllysine modification.

Belongs to the alpha-ketoglutarate dehydrogenase family. As to quaternary structure, homodimer. The 2-oxoglutarate dehydrogenase complex is composed of OGDH (2-oxoglutarate dehydrogenase; E1), DLST (dihydrolipoamide succinyltransferase; E2), DLD (dihydrolipoamide dehydrogenase; E3) and the assembly factor KGD4. It contains multiple copies of the three enzymatic components (E1, E2 and E3). In the nucleus, the 2-oxoglutarate dehydrogenase complex associates with KAT2A. Interacts with ABHD11; this interaction maintains the functional lipoylation of the 2-oxoglutarate dehydrogenase complex. The cofactor is thiamine diphosphate. Mg(2+) serves as cofactor.

The protein localises to the mitochondrion. Its subcellular location is the nucleus. The enzyme catalyses N(6)-[(R)-lipoyl]-L-lysyl-[protein] + 2-oxoglutarate + H(+) = N(6)-[(R)-S(8)-succinyldihydrolipoyl]-L-lysyl-[protein] + CO2. With respect to regulation, calcium ions and ADP stimulate, whereas ATP and NADH reduce catalytic activity. Functionally, 2-oxoglutarate dehydrogenase (E1o) component of the 2-oxoglutarate dehydrogenase complex (OGDHC). Participates in the first step, rate limiting for the overall conversion of 2-oxoglutarate to succinyl-CoA and CO(2) catalyzed by the whole OGDHC. Catalyzes the irreversible decarboxylation of 2-oxoglutarate (alpha-ketoglutarate) via the thiamine diphosphate (ThDP) cofactor and subsequent transfer of the decarboxylated acyl intermediate on an oxidized dihydrolipoyl group that is covalently amidated to the E2 enzyme (dihydrolipoyllysine-residue succinyltransferase or DLST). Plays a key role in the Krebs (citric acid) cycle, which is a common pathway for oxidation of fuel molecules, including carbohydrates, fatty acids, and amino acids. Can catalyze the decarboxylation of 2-oxoadipate in vitro, but at a much lower rate than 2-oxoglutarate. Mainly active in the mitochondrion. A fraction of the 2-oxoglutarate dehydrogenase complex also localizes in the nucleus and is required for lysine succinylation of histones: associates with KAT2A on chromatin and provides succinyl-CoA to histone succinyltransferase KAT2A. In Macaca fascicularis (Crab-eating macaque), this protein is 2-oxoglutarate dehydrogenase complex component E1.